A 407-amino-acid polypeptide reads, in one-letter code: Protein ATC1/LIC4 (407 aa).

It localises to the cytoplasm. Its subcellular location is the nucleus. In terms of biological role, involved in cation homeostasis and in the regulation of the cation stress signaling cascades. This Eremothecium gossypii (strain ATCC 10895 / CBS 109.51 / FGSC 9923 / NRRL Y-1056) (Yeast) protein is Protein ATC1/LIC4 (ATC1).